Here is a 206-residue protein sequence, read N- to C-terminus: MTVSVDDLCVTRGGVPILSGVSFDLAEGAALILQGPNGSGKTTLLRTLAGLQPPLAGQISGTEDRIAYAAHSDGLKSMLSVAENLRFWAAVFGRSDIAPALQAFDLHDLADRLAGTLSAGQKRRLGLARLLVTGRPVWMLDEPTVSLDKRAVEMFAAAVEAHLATGGSALIATHIDLGLRDAQVLDVGPLRASPTALAGASDEAFL.

The region spanning 3 to 206 (VSVDDLCVTR…LAGASDEAFL (204 aa)) is the ABC transporter domain. ATP is bound at residue 35–42 (GPNGSGKT).

This sequence belongs to the ABC transporter superfamily. CcmA exporter (TC 3.A.1.107) family. The complex is composed of two ATP-binding proteins (CcmA) and two transmembrane proteins (CcmB).

The protein resides in the cell inner membrane. The enzyme catalyses heme b(in) + ATP + H2O = heme b(out) + ADP + phosphate + H(+). Functionally, part of the ABC transporter complex CcmAB involved in the biogenesis of c-type cytochromes; once thought to export heme, this seems not to be the case, but its exact role is uncertain. Responsible for energy coupling to the transport system. The polypeptide is Cytochrome c biogenesis ATP-binding export protein CcmA (Roseobacter denitrificans (strain ATCC 33942 / OCh 114) (Erythrobacter sp. (strain OCh 114))).